A 714-amino-acid polypeptide reads, in one-letter code: MKSRYKRLTSLALSLSMALGISLPAWASPDTSVDNKVNFSTDVIYQIVTDRFADGDRTNNPAGDAFSGDRSNLKLYFGGDWQGIIDKINDGYLTGMGVTALWISQPVENITSVIKYSGVNNTSYHGYWARDFKQTNDAFGDFADFQNLIDTAHAHNIKVVIDFAPNHTSPADRDNPGFAENGGMYDNGSLLGAYSNDTAGLFHHNGGTDFSTIEDGIYKNLYDLADINHNNNAMDAYFKSAIDLWLGMGVDGIRFDAVKHMPFGWQKSFVSSIYGGDHPVFTFGEWYLGADQTDGDNIKFANESGMNLLDFEYAQEVREVFRDKTETMKDLYEVLASTESQYDYINNMVTFIDNHDMDRFQVAGSGTRATEQALALTLTSRGVPAIYYGTEQYMTGDGDPNNRAMMTSFNTGTTAYKVIQALAPLRKSNPAIAYGTTTERWVNNDVLIIERKFGSSAALVAINRNSSAAYPISGLLSSLPAGTYSDVLNGLLNGNSITVGSGGAVTNFTLAAGGTAVWQYTAPETSPAIGNVGPTMGQPGNIVTIDGRGFGGTAGTVYFGTTAVTGSGIVSWEDTQIKAVIPKVAAGKTGVSVKTSSGTASNTFKSFNVLTGDQVTVRFLVNQANTNYGTNVYLVGNAAELGSWDPNKAIGPMYNQVIAKYPSWYYDVSVPAGTKLDFKFIKKGGGTVTWEGGGNHTYTTPASGVGTVTVDWQN.

Positions 1–27 (MKSRYKRLTSLALSLSMALGISLPAWA) are cleaved as a signal peptide. Positions 28-165 (SPDTSVDNKV…NIKVVIDFAP (138 aa)) are A1. Positions 54, 59, 60, 78, and 80 each coordinate Ca(2+). Position 127–128 (127–128 (YW)) interacts with substrate. Position 166 (Asn166) interacts with Ca(2+). Residues 166–229 (NHTSPADRDN…NLYDLADINH (64 aa)) are b. His167 contributes to the substrate binding site. Ile217 is a Ca(2+) binding site. Residue 220-223 (NLYD) participates in substrate binding. Asp226 lines the Ca(2+) pocket. The segment at 230–434 (NNNAMDAYFK…LRKSNPAIAY (205 aa)) is A2. Substrate is bound at residue Arg254. The Nucleophile role is filled by Asp256. Position 259 to 260 (259 to 260 (KH)) interacts with substrate. His260 contacts Ca(2+). The active-site Proton donor is the Glu285. Residues His355, Asp399, and Arg403 each coordinate substrate. The c stretch occupies residues 435–523 (GTTTERWVNN…GTAVWQYTAP (89 aa)). Residues 524 to 610 (ETSPAIGNVG…SNTFKSFNVL (87 aa)) form a d region. One can recognise an IPT/TIG domain in the interval 527 to 607 (PAIGNVGPTM…GTASNTFKSF (81 aa)). The CBM20 domain maps to 609–714 (VLTGDQVTVR…VGTVTVDWQN (106 aa)). Residues 611–714 (TGDQVTVRFL…VGTVTVDWQN (104 aa)) form an e region.

This sequence belongs to the glycosyl hydrolase 13 family. As to quaternary structure, monomer. It depends on Ca(2+) as a cofactor.

It localises to the secreted. The catalysed reaction is Cyclizes part of a (1-&gt;4)-alpha-D-glucan chain by formation of a (1-&gt;4)-alpha-D-glucosidic bond.. The protein is Cyclomaltodextrin glucanotransferase (cgtM) of Paenibacillus macerans (Bacillus macerans).